The sequence spans 105 residues: Large ribosomal subunit protein uL24 (105 aa).

It belongs to the universal ribosomal protein uL24 family. As to quaternary structure, part of the 50S ribosomal subunit.

Functionally, one of two assembly initiator proteins, it binds directly to the 5'-end of the 23S rRNA, where it nucleates assembly of the 50S subunit. One of the proteins that surrounds the polypeptide exit tunnel on the outside of the subunit. This Clostridium botulinum (strain ATCC 19397 / Type A) protein is Large ribosomal subunit protein uL24.